The primary structure comprises 569 residues: Urease subunit alpha (569 aa).

In terms of domain architecture, Urease spans 131–569 (GGIDTHIHFI…LPLAQRYLLL (439 aa)). Ni(2+) contacts are provided by histidine 136, histidine 138, and lysine 219. Residue lysine 219 is modified to N6-carboxylysine. Histidine 221 lines the substrate pocket. Ni(2+) contacts are provided by histidine 248 and histidine 274. Histidine 322 functions as the Proton donor in the catalytic mechanism. Aspartate 362 contacts Ni(2+).

It belongs to the metallo-dependent hydrolases superfamily. Urease alpha subunit family. As to quaternary structure, heterotrimer of UreA (gamma), UreB (beta) and UreC (alpha) subunits. Three heterotrimers associate to form the active enzyme. It depends on Ni cation as a cofactor. Carboxylation allows a single lysine to coordinate two nickel ions.

The protein localises to the cytoplasm. The enzyme catalyses urea + 2 H2O + H(+) = hydrogencarbonate + 2 NH4(+). Its pathway is nitrogen metabolism; urea degradation; CO(2) and NH(3) from urea (urease route): step 1/1. This Synechococcus sp. (strain CC9311) protein is Urease subunit alpha.